The primary structure comprises 189 residues: Thioredoxin-like protein CITRX, chloroplastic (189 aa).

The transit peptide at 1-36 (MAMAAAASLLPACAAPTLPGRAFRPRRNSTPTASLS) directs the protein to the chloroplast. In terms of domain architecture, Thioredoxin spans 72 to 189 (GSGKYIAPDY…MIRNIIDNEL (118 aa)). Residues cysteine 112 and cysteine 115 each act as nucleophile in the active site. Cysteines 112 and 115 form a disulfide.

Belongs to the thioredoxin family. Plant CITRX-type subfamily.

The protein resides in the plastid. It is found in the chloroplast. In terms of biological role, probable thiol-disulfide oxidoreductase that may play a role in proper chloroplast development. In Oryza sativa subsp. indica (Rice), this protein is Thioredoxin-like protein CITRX, chloroplastic.